The chain runs to 147 residues: Ras-related protein RabK2 (147 aa).

Residues 11–15 and 63–66 each bind GTP; these read NTHGS and TKSD. Cysteine 145 is lipidated: S-geranylgeranyl cysteine.

The protein belongs to the small GTPase superfamily. Rab family.

It is found in the cell membrane. The sequence is that of Ras-related protein RabK2 (rabK2) from Dictyostelium discoideum (Social amoeba).